The sequence spans 294 residues: Homeobox-leucine zipper protein ATHB-16 (294 aa).

Polar residues predominate over residues 1-20 (MKRLSSSDSMCGLISTSTDE). Residues 1–31 (MKRLSSSDSMCGLISTSTDEQSPRGYGSNYQ) are disordered. Residues 56 to 115 (LSEKKRRLKVDQVKALEKNFELENKLEPERKTKLAQELGLQPRQVAVWFQNRRARWKTKQ) constitute a DNA-binding region (homeobox). The segment at 116-151 (LEKDYGVLKGQYDSLRHNFDSLRRDNDSLLQEISKI) is leucine-zipper. The span at 219–238 (SSDSCDSSAVLNDETSSDNG) shows a compositional bias: polar residues. Residues 219 to 241 (SSDSCDSSAVLNDETSSDNGRLT) form a disordered region.

Belongs to the HD-ZIP homeobox family. Class I subfamily. Widely expressed with a lower level in siliques.

Its subcellular location is the nucleus. In terms of biological role, probable transcription factor that may function as a negative regulator of the flowering time response to photoperiod. May act to repress cell expansion during plant development. The chain is Homeobox-leucine zipper protein ATHB-16 (ATHB-16) from Arabidopsis thaliana (Mouse-ear cress).